The following is a 145-amino-acid chain: D-aminoacyl-tRNA deacylase (145 aa).

A Gly-cisPro motif, important for rejection of L-amino acids motif is present at residues glycine 137 to proline 138.

Belongs to the DTD family. Homodimer.

The protein localises to the cytoplasm. The enzyme catalyses glycyl-tRNA(Ala) + H2O = tRNA(Ala) + glycine + H(+). It catalyses the reaction a D-aminoacyl-tRNA + H2O = a tRNA + a D-alpha-amino acid + H(+). Its function is as follows. An aminoacyl-tRNA editing enzyme that deacylates mischarged D-aminoacyl-tRNAs. Also deacylates mischarged glycyl-tRNA(Ala), protecting cells against glycine mischarging by AlaRS. Acts via tRNA-based rather than protein-based catalysis; rejects L-amino acids rather than detecting D-amino acids in the active site. By recycling D-aminoacyl-tRNA to D-amino acids and free tRNA molecules, this enzyme counteracts the toxicity associated with the formation of D-aminoacyl-tRNA entities in vivo and helps enforce protein L-homochirality. The sequence is that of D-aminoacyl-tRNA deacylase from Escherichia coli O7:K1 (strain IAI39 / ExPEC).